The chain runs to 168 residues: Probable deoxyuridine 5'-triphosphate nucleotidohydrolase (168 aa).

The protein belongs to the dCTP deaminase family. Archaeal dUTPase subfamily.

The catalysed reaction is dUTP + H2O = dUMP + diphosphate + H(+). It participates in pyrimidine metabolism; dUMP biosynthesis; dUMP from dCTP (dUTP route): step 2/2. Its function is as follows. This enzyme is involved in nucleotide metabolism: it produces dUMP, the immediate precursor of thymidine nucleotides and it decreases the intracellular concentration of dUTP so that uracil cannot be incorporated into DNA. The protein is Probable deoxyuridine 5'-triphosphate nucleotidohydrolase of Archaeoglobus fulgidus (strain ATCC 49558 / DSM 4304 / JCM 9628 / NBRC 100126 / VC-16).